The primary structure comprises 118 residues: NADH-quinone oxidoreductase subunit A (118 aa).

3 consecutive transmembrane segments (helical) span residues 6–26 (LPVLIFLLVALVVGVAPLLMG), 64–84 (AILFILFDLEIAFLFPWAVVF), and 87–107 (IGMTGFLAMMLFLAILVVGFI).

This sequence belongs to the complex I subunit 3 family. NDH-1 is composed of 14 different subunits. Subunits NuoA, H, J, K, L, M, N constitute the membrane sector of the complex.

It is found in the cell inner membrane. It carries out the reaction a quinone + NADH + 5 H(+)(in) = a quinol + NAD(+) + 4 H(+)(out). Functionally, NDH-1 shuttles electrons from NADH, via FMN and iron-sulfur (Fe-S) centers, to quinones in the respiratory chain. The immediate electron acceptor for the enzyme in this species is believed to be ubiquinone. Couples the redox reaction to proton translocation (for every two electrons transferred, four hydrogen ions are translocated across the cytoplasmic membrane), and thus conserves the redox energy in a proton gradient. The protein is NADH-quinone oxidoreductase subunit A of Acidithiobacillus ferrooxidans (strain ATCC 53993 / BNL-5-31) (Leptospirillum ferrooxidans (ATCC 53993)).